A 620-amino-acid chain; its full sequence is 1-deoxy-D-xylulose-5-phosphate synthase (620 aa).

Residues His-80 and 121–123 contribute to the thiamine diphosphate site; that span reads GHS. Asp-152 contributes to the Mg(2+) binding site. Residues 153–154, Asn-181, Tyr-288, and Glu-370 each bind thiamine diphosphate; that span reads GA. Mg(2+) is bound at residue Asn-181.

It belongs to the transketolase family. DXPS subfamily. In terms of assembly, homodimer. Mg(2+) is required as a cofactor. Requires thiamine diphosphate as cofactor.

The catalysed reaction is D-glyceraldehyde 3-phosphate + pyruvate + H(+) = 1-deoxy-D-xylulose 5-phosphate + CO2. It functions in the pathway metabolic intermediate biosynthesis; 1-deoxy-D-xylulose 5-phosphate biosynthesis; 1-deoxy-D-xylulose 5-phosphate from D-glyceraldehyde 3-phosphate and pyruvate: step 1/1. In terms of biological role, catalyzes the acyloin condensation reaction between C atoms 2 and 3 of pyruvate and glyceraldehyde 3-phosphate to yield 1-deoxy-D-xylulose-5-phosphate (DXP). This Salmonella agona (strain SL483) protein is 1-deoxy-D-xylulose-5-phosphate synthase.